The primary structure comprises 1061 residues: E3 ubiquitin-protein ligase Smurf1 (1061 aa).

The 116-residue stretch at 1–116 (MNKLDYPRRN…KGAGFQRLDL (116 aa)) folds into the C2 domain. 2 disordered regions span residues 143-176 (SGNP…WEER) and 188-496 (HATK…SGQR). Residues 167–200 (DSLPEGWEERRTDNGRVYYVNHATKSTQWDRPRQ) enclose the WW 1 domain. 2 stretches are compositionally biased toward polar residues: residues 207-225 (SHAT…NSGD) and 233-255 (TRST…SVTA). S262 is modified (phosphoserine). Residues 264-273 (EILSSVGKEN) show a composition bias toward polar residues. Low complexity-rich tracts occupy residues 274-300 (TSPT…SAGG) and 311-322 (PATPTSSTTSAS). A compositionally biased stretch (polar residues) spans 348 to 359 (TPTSPTGQQNYV). Positions 360–378 (NGNAQNGSTSGNGSGQAAQ) are enriched in low complexity. The segment covering 379-392 (PQSASNGWTQEDAA) has biased composition (polar residues). The span at 393 to 409 (TTTSPSTTTSPPRHSQS) shows a compositional bias: low complexity. Residue T412 is modified to Phosphothreonine. Residue S416 is modified to Phosphoserine. Polar residues predominate over residues 417 to 439 (PPASVTPSANGNVHSPNANSTPA). Over residues 480-494 (RNGGTSGGGGGGGSG) the composition is skewed to gly residues. WW domains are found at residues 513-546 (LDLP…DPRI) and 561-594 (GPLP…DPRL). The tract at residues 513–602 (LDLPPGYEMR…RLSGSILQMI (90 aa)) is interaction with MAD. 2 stretches are compositionally biased toward low complexity: residues 608 to 617 (PPTSAANAGT) and 624 to 656 (TPAT…TNPP). Positions 608 to 661 (PPTSAANAGTPAPPSATPATPSAAAAVPPQATPASNATPTTLTTTTNPPHRIVP) are disordered. An HECT domain is found at 723–1061 (RAKDMRKRLM…VEETCGFAVE (339 aa)). C1029 acts as the Glycyl thioester intermediate in catalysis.

In terms of assembly, interacts with phosphorylated MAD.

It carries out the reaction S-ubiquitinyl-[E2 ubiquitin-conjugating enzyme]-L-cysteine + [acceptor protein]-L-lysine = [E2 ubiquitin-conjugating enzyme]-L-cysteine + N(6)-ubiquitinyl-[acceptor protein]-L-lysine.. Its pathway is protein modification; protein ubiquitination. Functionally, E3 ubiquitin-protein ligase which accepts ubiquitin from an E2 ubiquitin-conjugating enzyme in the form of a thioester and then directly transfers the ubiquitin to targeted substrates. Down-regulates Dpp signaling after gastrulation by promoting MAD ubiquitination and subsequent degradation. This chain is E3 ubiquitin-protein ligase Smurf1, found in Drosophila melanogaster (Fruit fly).